The sequence spans 299 residues: tRNA(Met) cytidine acetate ligase (299 aa).

ATP-binding positions include 6–19, glycine 100, asparagine 157, and arginine 182; that span reads IAEY…HIYM.

This sequence belongs to the TmcAL family.

Its subcellular location is the cytoplasm. The catalysed reaction is cytidine(34) in elongator tRNA(Met) + acetate + ATP = N(4)-acetylcytidine(34) in elongator tRNA(Met) + AMP + diphosphate. Functionally, catalyzes the formation of N(4)-acetylcytidine (ac(4)C) at the wobble position of elongator tRNA(Met), using acetate and ATP as substrates. First activates an acetate ion to form acetyladenylate (Ac-AMP) and then transfers the acetyl group to tRNA to form ac(4)C34. This Mycoplasma mobile (strain ATCC 43663 / 163K / NCTC 11711) (Mesomycoplasma mobile) protein is tRNA(Met) cytidine acetate ligase.